Consider the following 313-residue polypeptide: Pyrimidine-specific ribonucleoside hydrolase RihB (313 aa).

Asp-11 serves as the catalytic Proton acceptor. Ca(2+)-binding residues include Asp-11, Asp-16, and Val-124. The substrate site is built by Gln-227 and His-239. Ca(2+) is bound at residue Asp-240.

Belongs to the IUNH family. RihB subfamily. Homotetramer. The cofactor is Ca(2+).

The enzyme catalyses a pyrimidine ribonucleoside + H2O = a pyrimidine nucleobase + D-ribose. In terms of biological role, hydrolyzes cytidine or uridine to ribose and cytosine or uracil, respectively. Has a clear preference for cytidine over uridine. Strictly specific for ribonucleosides. The polypeptide is Pyrimidine-specific ribonucleoside hydrolase RihB (Escherichia coli (strain SMS-3-5 / SECEC)).